We begin with the raw amino-acid sequence, 205 residues long: Protein N-terminal glutamine amidohydrolase (205 aa).

Residues Cys20, His74, and Asp90 contribute to the active site.

The protein belongs to the NTAQ1 family. Monomer.

It catalyses the reaction N-terminal L-glutaminyl-[protein] + H2O = N-terminal L-glutamyl-[protein] + NH4(+). In terms of biological role, mediates the side-chain deamidation of N-terminal glutamine residues to glutamate, an important step in N-end rule pathway of protein degradation. Conversion of the resulting N-terminal glutamine to glutamate renders the protein susceptible to arginylation, polyubiquitination and degradation as specified by the N-end rule. Does not act on substrates with internal or C-terminal glutamine and does not act on non-glutamine residues in any position. The chain is Protein N-terminal glutamine amidohydrolase (tun) from Drosophila grimshawi (Hawaiian fruit fly).